Reading from the N-terminus, the 507-residue chain is Heat shock 70 kDa protein 14-B (507 aa).

This sequence belongs to the heat shock protein 70 family. As to quaternary structure, component of ribosome-associated complex (RAC).

Its subcellular location is the cytoplasm. The protein localises to the cytosol. Component of the ribosome-associated complex (RAC), a complex involved in folding or maintaining nascent polypeptides in a folding-competent state. In Xenopus laevis (African clawed frog), this protein is Heat shock 70 kDa protein 14-B (hspa14-b).